The chain runs to 124 residues: ATP synthase epsilon chain (124 aa).

The protein belongs to the ATPase epsilon chain family. F-type ATPases have 2 components, CF(1) - the catalytic core - and CF(0) - the membrane proton channel. CF(1) has five subunits: alpha(3), beta(3), gamma(1), delta(1), epsilon(1). CF(0) has three main subunits: a, b and c.

It localises to the cell membrane. In terms of biological role, produces ATP from ADP in the presence of a proton gradient across the membrane. The chain is ATP synthase epsilon chain from Corynebacterium efficiens (strain DSM 44549 / YS-314 / AJ 12310 / JCM 11189 / NBRC 100395).